A 60-amino-acid chain; its full sequence is Large ribosomal subunit protein bL32 (60 aa).

Residues 1-20 (MAVQKSRKSRSRRDMRRSHH) show a composition bias toward basic residues. The tract at residues 1–22 (MAVQKSRKSRSRRDMRRSHHRM) is disordered.

Belongs to the bacterial ribosomal protein bL32 family.

This chain is Large ribosomal subunit protein bL32, found in Psychrobacter arcticus (strain DSM 17307 / VKM B-2377 / 273-4).